The primary structure comprises 358 residues: Dynein axonemal assembly factor 10 (358 aa).

WD repeat units lie at residues 64–106, 116–155, 163–206, 208–250, 258–298, and 320–358; these read EKSK…SPVY, NAID…TPVV, ETKR…LRWE, NIRN…PSKG, AHKS…QRSK, and LSTQ…LNTV.

As to quaternary structure, interacts with PIH1D1; the interaction associates DNAAF10 with the R2TP complex. Interacts with several dynein axonemal assembly factors.

The protein resides in the dynein axonemal particle. Its function is as follows. Key assembly factor specifically required for the stability of axonemal dynein heavy chains in cytoplasm. This chain is Dynein axonemal assembly factor 10 (dnaaf10), found in Danio rerio (Zebrafish).